A 284-amino-acid chain; its full sequence is Bifunctional protein FolD (284 aa).

Residues 165–167 (GRS), serine 190, and isoleucine 231 each bind NADP(+).

It belongs to the tetrahydrofolate dehydrogenase/cyclohydrolase family. In terms of assembly, homodimer.

It carries out the reaction (6R)-5,10-methylene-5,6,7,8-tetrahydrofolate + NADP(+) = (6R)-5,10-methenyltetrahydrofolate + NADPH. The enzyme catalyses (6R)-5,10-methenyltetrahydrofolate + H2O = (6R)-10-formyltetrahydrofolate + H(+). It functions in the pathway one-carbon metabolism; tetrahydrofolate interconversion. Functionally, catalyzes the oxidation of 5,10-methylenetetrahydrofolate to 5,10-methenyltetrahydrofolate and then the hydrolysis of 5,10-methenyltetrahydrofolate to 10-formyltetrahydrofolate. This chain is Bifunctional protein FolD, found in Streptococcus thermophilus (strain CNRZ 1066).